Consider the following 261-residue polypeptide: Phosphatidylglycerol--prolipoprotein diacylglyceryl transferase (261 aa).

The next 4 membrane-spanning stretches (helical) occupy residues 17–37, 59–79, 94–114, and 121–141; these read FAIH…LLLG, LLFA…TLFY, IWEG…ALLW, and TSFF…LAFG. R142 lines the a 1,2-diacyl-sn-glycero-3-phospho-(1'-sn-glycerol) pocket. A run of 2 helical transmembrane segments spans residues 174–194 and 228–248; these read PSQI…LWIY and FLGL…PMII.

This sequence belongs to the Lgt family.

The protein localises to the cell inner membrane. The catalysed reaction is L-cysteinyl-[prolipoprotein] + a 1,2-diacyl-sn-glycero-3-phospho-(1'-sn-glycerol) = an S-1,2-diacyl-sn-glyceryl-L-cysteinyl-[prolipoprotein] + sn-glycerol 1-phosphate + H(+). It functions in the pathway protein modification; lipoprotein biosynthesis (diacylglyceryl transfer). In terms of biological role, catalyzes the transfer of the diacylglyceryl group from phosphatidylglycerol to the sulfhydryl group of the N-terminal cysteine of a prolipoprotein, the first step in the formation of mature lipoproteins. The chain is Phosphatidylglycerol--prolipoprotein diacylglyceryl transferase from Polynucleobacter asymbioticus (strain DSM 18221 / CIP 109841 / QLW-P1DMWA-1) (Polynucleobacter necessarius subsp. asymbioticus).